A 142-amino-acid polypeptide reads, in one-letter code: MAARNTARKRAFQILFEGDQRGADVLTVLADWVRHSRSDTRQPPVSEYTMELVEGYAGRAERIDELIAQYSVDWTLDRMPVVDRNILRLGAYELLWVDATPDAVVLDEMVQLAKEFSTDESPAFINGLLGRLKELKPSLRRE.

Belongs to the NusB family.

Its function is as follows. Involved in transcription antitermination. Required for transcription of ribosomal RNA (rRNA) genes. Binds specifically to the boxA antiterminator sequence of the ribosomal RNA (rrn) operons. The protein is Transcription antitermination protein NusB of Streptomyces coelicolor (strain ATCC BAA-471 / A3(2) / M145).